We begin with the raw amino-acid sequence, 120 residues long: NAD(P)H-quinone oxidoreductase subunit 3, chloroplastic (120 aa).

3 consecutive transmembrane segments (helical) span residues 9 to 29 (IFWA…LISG), 64 to 84 (MFAL…PWAM), and 88 to 108 (VLGV…ILGL).

Belongs to the complex I subunit 3 family. In terms of assembly, NDH is composed of at least 16 different subunits, 5 of which are encoded in the nucleus.

The protein localises to the plastid. It localises to the chloroplast thylakoid membrane. It catalyses the reaction a plastoquinone + NADH + (n+1) H(+)(in) = a plastoquinol + NAD(+) + n H(+)(out). It carries out the reaction a plastoquinone + NADPH + (n+1) H(+)(in) = a plastoquinol + NADP(+) + n H(+)(out). In terms of biological role, NDH shuttles electrons from NAD(P)H:plastoquinone, via FMN and iron-sulfur (Fe-S) centers, to quinones in the photosynthetic chain and possibly in a chloroplast respiratory chain. The immediate electron acceptor for the enzyme in this species is believed to be plastoquinone. Couples the redox reaction to proton translocation, and thus conserves the redox energy in a proton gradient. The polypeptide is NAD(P)H-quinone oxidoreductase subunit 3, chloroplastic (Draba nemorosa (Woodland whitlowgrass)).